Here is a 554-residue protein sequence, read N- to C-terminus: DnaJ homolog subfamily C member 1 (554 aa).

The first 47 residues, 1–47 (MTAPCSQPAQLPGRRQLGLVPFPPPPPRTPLLWLLLLLLAAVAPARG), serve as a signal peptide directing secretion. Residues 48 to 153 (WESGDLELFD…RRVRKMSNAE (106 aa)) lie on the Lumenal side of the membrane. The J domain occupies 65–129 (NFYQFLGVQQ…ERRQRYDDIL (65 aa)). The helical transmembrane segment at 154–174 (LALLLFIILTVGHYAVVWSIY) threads the bilayer. At 175-554 (LEKQLDELLS…LVQKKKQAKS (380 aa)) the chain is on the cytoplasmic side. Residues 325–379 (KQAPEWTEEDLSQLTRSMVKFPGGTPGRWEKIAHELGRSVTDVTTKAKQLKDSVT) form the SANT 1 domain. S381 is modified (phosphoserine). The segment covering 392–405 (STVQNSRPIKTATT) has biased composition (polar residues). Positions 392–500 (STVQNSRPIK…RSAEEPWTQN (109 aa)) are disordered. Positions 421–432 (AAEEEQEGDSGE) are enriched in acidic residues. Residue S430 is modified to Phosphoserine. Over residues 455–472 (AKPEPEEKSRAKRQKDFD) the composition is skewed to basic and acidic residues. Positions 473–482 (IAEQNESSDE) are enriched in acidic residues. S479, S480, S484, and S492 each carry phosphoserine. Basic and acidic residues predominate over residues 483–494 (ESLRKERARSAE). The SANT 2 domain maps to 492–547 (SAEEPWTQNQQKLLELALQQYPRGSSDRWDKIARCVPSKSKEDCIARYKLLVELVQ).

As to quaternary structure, interacts (via J domain) with HSPA5. Interacts (via cytosolic domain) with ribosomes. Interacts (via SANT 2 domain) with SERPINA3; the interaction delays the formation of the covalent inhibitory complex SERPINA3-chymotrypsin, but does not alter the catalytic activity of SERPINA3. Interacts (via SANT 2 domain) with ITIH4 (via C-terminus); the interaction protects ITIH4 against in vitro cleavage by kallikrein.

Its subcellular location is the endoplasmic reticulum membrane. It localises to the nucleus membrane. The protein localises to the microsome membrane. Its function is as follows. May modulate protein synthesis. This chain is DnaJ homolog subfamily C member 1 (DNAJC1), found in Homo sapiens (Human).